A 531-amino-acid polypeptide reads, in one-letter code: 4-hydroxyphenylacetaldehyde oxime monooxygenase (531 aa).

Residues 18–38 (WQTCLLVLLPVLLVSYYLLTS) traverse the membrane as a helical segment. The heme b site is built by Arg122, Arg151, Arg466, and Cys468.

It belongs to the cytochrome P450 family. Heme b serves as cofactor.

It is found in the endoplasmic reticulum membrane. The enzyme catalyses (E)-4-hydroxyphenylacetaldehyde oxime + reduced [NADPH--hemoprotein reductase] + O2 = (S)-4-hydroxymandelonitrile + oxidized [NADPH--hemoprotein reductase] + 2 H2O + H(+). It carries out the reaction (E)-4-hydroxyphenylacetaldehyde oxime = (Z)-(4-hydroxyphenyl)acetaldehyde oxime. The catalysed reaction is (Z)-(4-hydroxyphenyl)acetaldehyde oxime = 4-hydroxyphenylacetonitrile + H2O. It catalyses the reaction 4-hydroxyphenylacetonitrile + reduced [NADPH--hemoprotein reductase] + O2 = (S)-4-hydroxymandelonitrile + oxidized [NADPH--hemoprotein reductase] + H2O + H(+). It functions in the pathway secondary metabolite biosynthesis; dhurrin biosynthesis; dhurrin from L-tyrosine: step 2/3. Its function is as follows. Cytochrome P450 involved in the biosynthesis of the cyanogenic glucoside dhurrin. Catalyzes the conversion of p-hydroxyphenylacetaldoxime to p-hydroxymandelonitrile via three different and successive activities: isomerization of the (E) isomer to the (Z) isomer of p-hydroxyphenylacetaldoxime, followed by dehydration of the oxime to the corresponding nitrile, and C-hydroxylation of the nitrile to produce p-hydroxymandelonitrile. This Sorghum bicolor (Sorghum) protein is 4-hydroxyphenylacetaldehyde oxime monooxygenase.